The sequence spans 146 residues: Putative pre-16S rRNA nuclease (146 aa).

Belongs to the YqgF nuclease family.

The protein resides in the cytoplasm. Its function is as follows. Could be a nuclease involved in processing of the 5'-end of pre-16S rRNA. The sequence is that of Putative pre-16S rRNA nuclease from Mycoplasmopsis pulmonis (strain UAB CTIP) (Mycoplasma pulmonis).